We begin with the raw amino-acid sequence, 284 residues long: MFIISGRTMLKKAQQEGYAVPAFNIHNLETLQVVVETAAELRSPLIVAGTPGTFSYAGVGNIVAIAAELAKSWNHPLAVHLDHHEKLADIKMKVAAGVRSVMIDGSHFPFADNIALVKSVVDYCHRYDVSVEAELGRLGGQEDDLIVDGKDALYTHPEQAREFVEKTGIDSLAIAIGTAHGLYTAEPKLDFERLTEIRQRVDVPLVLHGASGLPTRDITRAISLGICKVNVATELKIAFSGALKNYLTQHAEASDPHHYMIPAKAAMKEVVRKVIADCGCEGKL.

D82 (proton donor) is an active-site residue. H83 and H180 together coordinate Zn(2+). Residue G181 coordinates dihydroxyacetone phosphate. H208 lines the Zn(2+) pocket. Dihydroxyacetone phosphate contacts are provided by residues 209–211 (GAS) and 230–233 (NVAT).

This sequence belongs to the class II fructose-bisphosphate aldolase family. TagBP aldolase GatY subfamily. In terms of assembly, forms a complex with GatZ. It depends on Zn(2+) as a cofactor.

The catalysed reaction is D-tagatofuranose 1,6-bisphosphate = D-glyceraldehyde 3-phosphate + dihydroxyacetone phosphate. It functions in the pathway carbohydrate metabolism; D-tagatose 6-phosphate degradation; D-glyceraldehyde 3-phosphate and glycerone phosphate from D-tagatose 6-phosphate: step 2/2. Functionally, catalytic subunit of the tagatose-1,6-bisphosphate aldolase GatYZ, which catalyzes the reversible aldol condensation of dihydroxyacetone phosphate (DHAP or glycerone-phosphate) with glyceraldehyde 3-phosphate (G3P) to produce tagatose 1,6-bisphosphate (TBP). Requires GatZ subunit for full activity and stability. Is involved in the catabolism of galactitol. This Salmonella choleraesuis (strain SC-B67) protein is D-tagatose-1,6-bisphosphate aldolase subunit GatY.